Reading from the N-terminus, the 440-residue chain is Chromosome partition protein MukF (440 aa).

The segment at 208 to 236 is leucine-zipper; it reads LSETSGTLRELQDTLEAAGDKLQANLLRI.

The protein belongs to the MukF family. Interacts, and probably forms a ternary complex, with MukE and MukB via its C-terminal region. The complex formation is stimulated by calcium or magnesium. It is required for an interaction between MukE and MukB.

Its subcellular location is the cytoplasm. It localises to the nucleoid. Involved in chromosome condensation, segregation and cell cycle progression. May participate in facilitating chromosome segregation by condensation DNA from both sides of a centrally located replisome during cell division. Not required for mini-F plasmid partitioning. Probably acts via its interaction with MukB and MukE. Overexpression results in anucleate cells. It has a calcium binding activity. This chain is Chromosome partition protein MukF, found in Escherichia coli (strain ATCC 8739 / DSM 1576 / NBRC 3972 / NCIMB 8545 / WDCM 00012 / Crooks).